A 432-amino-acid chain; its full sequence is 5-methylthioadenosine/S-adenosylhomocysteine deaminase (432 aa).

Residues H62 and H64 each contribute to the Zn(2+) site. Positions 91 and 184 each coordinate substrate. Residue H211 coordinates Zn(2+). Positions 214 and 299 each coordinate substrate. D299 serves as a coordination point for Zn(2+).

The protein belongs to the metallo-dependent hydrolases superfamily. MTA/SAH deaminase family. Zn(2+) is required as a cofactor.

It catalyses the reaction S-adenosyl-L-homocysteine + H2O + H(+) = S-inosyl-L-homocysteine + NH4(+). The catalysed reaction is S-methyl-5'-thioadenosine + H2O + H(+) = S-methyl-5'-thioinosine + NH4(+). In terms of biological role, catalyzes the deamination of 5-methylthioadenosine and S-adenosyl-L-homocysteine into 5-methylthioinosine and S-inosyl-L-homocysteine, respectively. Is also able to deaminate adenosine. This Haloarcula marismortui (strain ATCC 43049 / DSM 3752 / JCM 8966 / VKM B-1809) (Halobacterium marismortui) protein is 5-methylthioadenosine/S-adenosylhomocysteine deaminase.